A 269-amino-acid polypeptide reads, in one-letter code: Cytochrome c oxidase subunit 3 (269 aa).

The next 7 membrane-spanning stretches (helical) occupy residues 13-33 (PFHL…LLVL), 46-66 (NGHY…SFWF), 90-110 (GVIL…WAFF), 138-160 (PLLN…HSII), 167-187 (ALYG…FQGV), 207-227 (FGTG…LVAL), and 245-265 (AGIL…ISIY).

This sequence belongs to the cytochrome c oxidase subunit 3 family. In terms of assembly, component of the cytochrome c oxidase (complex IV, CIV), a multisubunit enzyme composed of a catalytic core of 3 subunits and several supernumerary subunits. The complex exists as a monomer or a dimer and forms supercomplexes (SCs) in the inner mitochondrial membrane with ubiquinol-cytochrome c oxidoreductase (cytochrome b-c1 complex, complex III, CIII).

The protein localises to the mitochondrion inner membrane. It catalyses the reaction 4 Fe(II)-[cytochrome c] + O2 + 8 H(+)(in) = 4 Fe(III)-[cytochrome c] + 2 H2O + 4 H(+)(out). Component of the cytochrome c oxidase, the last enzyme in the mitochondrial electron transport chain which drives oxidative phosphorylation. The respiratory chain contains 3 multisubunit complexes succinate dehydrogenase (complex II, CII), ubiquinol-cytochrome c oxidoreductase (cytochrome b-c1 complex, complex III, CIII) and cytochrome c oxidase (complex IV, CIV), that cooperate to transfer electrons derived from NADH and succinate to molecular oxygen, creating an electrochemical gradient over the inner membrane that drives transmembrane transport and the ATP synthase. Cytochrome c oxidase is the component of the respiratory chain that catalyzes the reduction of oxygen to water. Electrons originating from reduced cytochrome c in the intermembrane space (IMS) are transferred via the dinuclear copper A center (CU(A)) of subunit 2 and heme A of subunit 1 to the active site in subunit 1, a binuclear center (BNC) formed by heme A3 and copper B (CU(B)). The BNC reduces molecular oxygen to 2 water molecules using 4 electrons from cytochrome c in the IMS and 4 protons from the mitochondrial matrix. The polypeptide is Cytochrome c oxidase subunit 3 (COX3) (Pyricularia grisea (Crabgrass-specific blast fungus)).